We begin with the raw amino-acid sequence, 77 residues long: uncharacterized protein (77 aa).

Its subcellular location is the plastid. The protein resides in the cyanelle. This is an uncharacterized protein from Cyanophora paradoxa.